Reading from the N-terminus, the 672-residue chain is DNA ligase (672 aa).

Residues 35-39 (DAEYD), 84-85 (SL), and E116 each bind NAD(+). K118 (N6-AMP-lysine intermediate) is an active-site residue. 4 residues coordinate NAD(+): R139, E179, K295, and K319. Zn(2+) is bound by residues C413, C416, C431, and C436. The BRCT domain maps to 593-672 (PRSAPLTGKT…EEFLRLAGKI (80 aa)).

It belongs to the NAD-dependent DNA ligase family. LigA subfamily. The cofactor is Mg(2+). Mn(2+) serves as cofactor.

The catalysed reaction is NAD(+) + (deoxyribonucleotide)n-3'-hydroxyl + 5'-phospho-(deoxyribonucleotide)m = (deoxyribonucleotide)n+m + AMP + beta-nicotinamide D-nucleotide.. Functionally, DNA ligase that catalyzes the formation of phosphodiester linkages between 5'-phosphoryl and 3'-hydroxyl groups in double-stranded DNA using NAD as a coenzyme and as the energy source for the reaction. It is essential for DNA replication and repair of damaged DNA. The chain is DNA ligase from Syntrophus aciditrophicus (strain SB).